The chain runs to 420 residues: Gamma-glutamyl phosphate reductase (420 aa).

The protein belongs to the gamma-glutamyl phosphate reductase family.

Its subcellular location is the cytoplasm. The enzyme catalyses L-glutamate 5-semialdehyde + phosphate + NADP(+) = L-glutamyl 5-phosphate + NADPH + H(+). Its pathway is amino-acid biosynthesis; L-proline biosynthesis; L-glutamate 5-semialdehyde from L-glutamate: step 2/2. In terms of biological role, catalyzes the NADPH-dependent reduction of L-glutamate 5-phosphate into L-glutamate 5-semialdehyde and phosphate. The product spontaneously undergoes cyclization to form 1-pyrroline-5-carboxylate. This chain is Gamma-glutamyl phosphate reductase, found in Cereibacter sphaeroides (strain ATCC 17029 / ATH 2.4.9) (Rhodobacter sphaeroides).